We begin with the raw amino-acid sequence, 193 residues long: Peptidyl-tRNA hydrolase (193 aa).

A tRNA-binding site is contributed by Tyr-17. His-22 functions as the Proton acceptor in the catalytic mechanism. Positions 68, 70, and 115 each coordinate tRNA.

This sequence belongs to the PTH family. In terms of assembly, monomer.

It localises to the cytoplasm. It catalyses the reaction an N-acyl-L-alpha-aminoacyl-tRNA + H2O = an N-acyl-L-amino acid + a tRNA + H(+). Its function is as follows. Hydrolyzes ribosome-free peptidyl-tRNAs (with 1 or more amino acids incorporated), which drop off the ribosome during protein synthesis, or as a result of ribosome stalling. In terms of biological role, catalyzes the release of premature peptidyl moieties from peptidyl-tRNA molecules trapped in stalled 50S ribosomal subunits, and thus maintains levels of free tRNAs and 50S ribosomes. The sequence is that of Peptidyl-tRNA hydrolase from Alteromonas mediterranea (strain DSM 17117 / CIP 110805 / LMG 28347 / Deep ecotype).